The primary structure comprises 267 residues: Elsinochrome reductase 1 (267 aa).

Residues Ile26, Asp72, Asn99, and Arg132 each contribute to the NADP(+) site. Residue Ser149 is the Proton donor of the active site. Positions 163, 167, 196, and 198 each coordinate NADP(+). Tyr163 functions as the Proton acceptor in the catalytic mechanism. Catalysis depends on Lys167, which acts as the Lowers pKa of active site Tyr.

Belongs to the short-chain dehydrogenases/reductases (SDR) family.

Reductase; part of the gene cluster that mediates the biosynthesis of elsinochromes, pigments consisting of at least four interconvertible tautomers (A, B, C and D) that have a core phenolic quinone to which various side chains are attached and which play an important role in fungal pathogenesis. The non-reducing polyketide synthase PKS1 was proposed to iteratively catalyze decarboxylation between acetyl-CoA and malonyl-CoA subunits for polyketide chain elongation. The released polyketide undergoes cyclization to form an aromatic ring, and proceeds via serial modification steps to produce the heptaketide back- bone of elsinochrome. As elsinochrome has a symmetrical structure, two identical heptaketides are fused to form a core 1,2-dihydrobenzo-perylene ring structure, which can then be successively modified to produce the various derivatives of elsinochrome. Some of these reactions may be cooperatively carried out, at least in part, by the products of RDT1, OXR1 and PKS1. PRF1, embedded within the elsinochrome cluster possibly functions to stabilize some of the biosynthetic enzymes required for elsinochrome production. As prefoldin is a hexamer containing 2 a and 4 b subunits, additional prefoldin subunits, whose coding genes may not immediately link to the elsinochrome biosynthetic gene cluster, are required to fulfill the chaperone function. In addition, no methyltransferase-coding gene exists within the biosynthetic gene cluster, even though elsinochrome has four methyl groups at positions C3, C7, C8 and C12. Apparently, the identified gene cluster does not contain the entire entourage of genes responsible for elsinochrome biosynthesis. Once elsinochrome is synthesized, it must be exported outside the fungal cells, which is probably accomplished by the ECT1 transporter, to avoid toxicity. This is Elsinochrome reductase 1 from Elsinoe fawcettii (Citrus scab fungus).